The following is a 193-amino-acid chain: Hypoxanthine/guanine phosphoribosyltransferase (193 aa).

It belongs to the purine/pyrimidine phosphoribosyltransferase family. Archaeal HPRT subfamily. In terms of assembly, homodimer.

Its subcellular location is the cytoplasm. The catalysed reaction is IMP + diphosphate = hypoxanthine + 5-phospho-alpha-D-ribose 1-diphosphate. The enzyme catalyses GMP + diphosphate = guanine + 5-phospho-alpha-D-ribose 1-diphosphate. It functions in the pathway purine metabolism; IMP biosynthesis via salvage pathway; IMP from hypoxanthine: step 1/1. Catalyzes a salvage reaction resulting in the formation of IMP that is energically less costly than de novo synthesis. The sequence is that of Hypoxanthine/guanine phosphoribosyltransferase from Methanothermobacter thermautotrophicus (strain ATCC 29096 / DSM 1053 / JCM 10044 / NBRC 100330 / Delta H) (Methanobacterium thermoautotrophicum).